The following is a 430-amino-acid chain: tRNA(Ile)-lysidine synthase (430 aa).

27 to 32 (SGGSDS) contributes to the ATP binding site.

Belongs to the tRNA(Ile)-lysidine synthase family.

The protein localises to the cytoplasm. The enzyme catalyses cytidine(34) in tRNA(Ile2) + L-lysine + ATP = lysidine(34) in tRNA(Ile2) + AMP + diphosphate + H(+). Its function is as follows. Ligates lysine onto the cytidine present at position 34 of the AUA codon-specific tRNA(Ile) that contains the anticodon CAU, in an ATP-dependent manner. Cytidine is converted to lysidine, thus changing the amino acid specificity of the tRNA from methionine to isoleucine. This chain is tRNA(Ile)-lysidine synthase, found in Rickettsia bellii (strain OSU 85-389).